The following is a 92-amino-acid chain: Small ribosomal subunit protein uS19c (92 aa).

This sequence belongs to the universal ribosomal protein uS19 family.

Its subcellular location is the plastid. The protein resides in the chloroplast. Its function is as follows. Protein S19 forms a complex with S13 that binds strongly to the 16S ribosomal RNA. This is Small ribosomal subunit protein uS19c from Nicotiana tomentosiformis (Tobacco).